The chain runs to 72 residues: Translation initiation factor IF-1 (72 aa).

The S1-like domain maps to 1–72 (MAKEDVIEVE…TRGRITYRFK (72 aa)).

The protein belongs to the IF-1 family. In terms of assembly, component of the 30S ribosomal translation pre-initiation complex which assembles on the 30S ribosome in the order IF-2 and IF-3, IF-1 and N-formylmethionyl-tRNA(fMet); mRNA recruitment can occur at any time during PIC assembly.

It is found in the cytoplasm. Its function is as follows. One of the essential components for the initiation of protein synthesis. Stabilizes the binding of IF-2 and IF-3 on the 30S subunit to which N-formylmethionyl-tRNA(fMet) subsequently binds. Helps modulate mRNA selection, yielding the 30S pre-initiation complex (PIC). Upon addition of the 50S ribosomal subunit IF-1, IF-2 and IF-3 are released leaving the mature 70S translation initiation complex. The protein is Translation initiation factor IF-1 of Listeria innocua serovar 6a (strain ATCC BAA-680 / CLIP 11262).